The sequence spans 605 residues: Protein cueball (605 aa).

The signal sequence occupies residues 1–31; sequence MAYIDQKHNTFWDDFAIALRDKIVFLNSTWG. Residues Asn27, Asn64, and Asn85 are each glycosylated (N-linked (GlcNAc...) asparagine). Residues 32 to 486 are Extracellular-facing; sequence EIHASAHRFE…QCGPAPPVQG (455 aa). LDL-receptor class B repeat units lie at residues 53-97, 98-145, 146-190, and 191-236; these read EMIY…DPLN, RNLF…DICR, RQLY…DQLS, and DRIF…NEDA. Residues Asn261 and Asn314 are each glycosylated (N-linked (GlcNAc...) asparagine). 2 EGF-like domains span residues 322–359 and 394–431; these read EGDRISQLEREHCLNGASFMSRGEFCICPVGFKGARCE and EYHKCNGHCLNSGHCSMDKESDAMRCECRPNFGGERCE. Cystine bridges form between Cys334–Cys347, Cys349–Cys358, Cys398–Cys408, Cys402–Cys419, and Cys421–Cys430. N-linked (GlcNAc...) asparagine glycosylation is found at Asn433 and Asn464. A helical membrane pass occupies residues 487-507; the sequence is PLIIVIVLGLVTTSGLVALTV. Residues 508–605 are Cytoplasmic-facing; that stretch reads HGVRLIYKPK…IHSMEDNLLS (98 aa).

The protein belongs to the cueball family.

Its subcellular location is the cell membrane. Has a role in spermatogenesis and oogenesis. The chain is Protein cueball from Drosophila grimshawi (Hawaiian fruit fly).